The sequence spans 177 residues: Large ribosomal subunit protein uL6 (177 aa).

Belongs to the universal ribosomal protein uL6 family. Part of the 50S ribosomal subunit.

In terms of biological role, this protein binds to the 23S rRNA, and is important in its secondary structure. It is located near the subunit interface in the base of the L7/L12 stalk, and near the tRNA binding site of the peptidyltransferase center. The polypeptide is Large ribosomal subunit protein uL6 (Vibrio cholerae serotype O1 (strain ATCC 39541 / Classical Ogawa 395 / O395)).